The chain runs to 314 residues: Olfactory receptor 1E1 (314 aa).

The Extracellular portion of the chain corresponds to 1–25 (MMGQNQTSISDFLLLGLPIQPEQQN). N-linked (GlcNAc...) asparagine glycosylation occurs at Asn5. A helical membrane pass occupies residues 26-49 (LCYALFLAMYLTTLLGNLLIIVLI). The Cytoplasmic segment spans residues 50–57 (RLDSHLHT). Residues 58-79 (PMYLFLSNLSFSDLCFSSVTIP) form a helical membrane-spanning segment. Over 80 to 100 (KLLQNMQNQDPSIPYADCLTQ) the chain is Extracellular. A disulfide bond links Cys97 and Cys189. The helical transmembrane segment at 101–120 (MYFFLLFGDLESFLLVAMAY) threads the bilayer. Residues 121 to 139 (DRYVAICFALHYTAIMSPM) lie on the Cytoplasmic side of the membrane. The chain crosses the membrane as a helical span at residues 140 to 158 (LCLSLVALSWVLTTFHAML). Over 159–195 (HTLLMARLCFCADNVIPHFFCDMSALLKLACSDTRVN) the chain is Extracellular. A helical transmembrane segment spans residues 196 to 219 (EWVIFIMGGLIVVIPFLLILGSYA). At 220 to 236 (RIVSSILKVPSSKGICK) the chain is on the cytoplasmic side. Residues 237–259 (AFSTCGSHLSVVSLFYGTVIGLY) form a helical membrane-spanning segment. Topologically, residues 260–272 (LCPSANSSTLKET) are extracellular. The chain crosses the membrane as a helical span at residues 273–292 (VMAMMYTVVTPMLNPFIYSL). Topologically, residues 293–314 (RNGDMKGALSRVIHQKKTFFSL) are cytoplasmic.

The protein belongs to the G-protein coupled receptor 1 family.

It localises to the cell membrane. Its function is as follows. Odorant receptor. This chain is Olfactory receptor 1E1 (OR1E1), found in Gorilla gorilla gorilla (Western lowland gorilla).